We begin with the raw amino-acid sequence, 412 residues long: Histone-lysine N-methyltransferase SUV39H1 (412 aa).

An interaction with SIRT1 region spans residues 1–89; it reads MAENLKGCSV…LKCVRILKQF (89 aa). The Chromo domain maps to 43-101; sequence FEVEYLCDYKKIREQEYYLVKWRGYPDSESTWEPRQNLKCVRILKQFHKDLERELLRRH. Residues 179–240 enclose the Pre-SET domain; sequence VGCECQDCLW…DCPNRVVQKG (62 aa). 9 residues coordinate Zn(2+): C181, C183, C186, C194, C195, C222, C226, C228, and C232. The SET domain maps to 243–366; that stretch reads YDLCIFRTDD…AGEELTFDYN (124 aa). 254 to 256 serves as a coordination point for S-adenosyl-L-methionine; sequence RGW. Residues 255–377 form a mediates interaction with MECOM region; that stretch reads GWGVRTLEKI…QVDPVDMEST (123 aa). The residue at position 266 (K266) is an N6-acetyllysine. S-adenosyl-L-methionine contacts are provided by residues Y297 and 323-324; that span reads NH. C326 lines the Zn(2+) pocket. S391 is modified (phosphoserine). The Post-SET domain maps to 396 to 412; sequence VRIECKCGTESCRKYLF. Zn(2+) contacts are provided by C400, C402, and C407.

This sequence belongs to the class V-like SAM-binding methyltransferase superfamily. Histone-lysine methyltransferase family. Suvar3-9 subfamily. In terms of assembly, interacts with H3 and H4 histones. Interacts with GFI1B, DNMT3B, CBX1, CBX4, CCAR2, MBD1, RUNX1, RUNX3, MYOD1, SMAD5 and RB1. Interacts with SBF1 through the SET domain. Interacts with HDAC1 and HDAC2 through the N-terminus and associates with the core histone deacetylase complex composed of HDAC1, HDAC2, RBBP4 and RBBP7. Component of the eNoSC complex, composed of SIRT1, SUV39H1 and RRP8. Interacts (via SET domain) with MECOM; enhances MECOM transcriptional repression activity. Interacts with LMNA; the interaction increases stability of SUV39H1. The large PER complex involved in the histone methylation is composed of at least PER2, CBX3, TRIM28, SUV39H1 and/or SUV39H2; CBX3 mediates the formation of the complex. (Microbial infection) Interacts with HTLV-1 Tax protein, leading to abrogate Tax transactivation of HTLV-1 LTR. Phosphorylated on serine residues, and to a lesser degree, on threonine residues. The phosphorylated form is stabilized by SBF1 and is less active in its transcriptional repressor function. In terms of processing, ubiquitinated by the DCX(DCAF13) E3 ubiquitin ligase complex, leading to its degradation. Post-translationally, acetylated at Lys-266, leading to inhibition of enzyme activity. SIRT1-mediated deacetylation relieves this inhibition. (Microbial infection) A higher molecular weight form is also seen in M.bovis infected cells.

The protein localises to the nucleus. Its subcellular location is the nucleus lamina. The protein resides in the nucleoplasm. It localises to the chromosome. It is found in the centromere. The protein localises to the cytoplasmic vesicle. Its subcellular location is the phagosome lumen. The protein resides in the cell membrane. The catalysed reaction is L-lysyl(9)-[histone H3] + 3 S-adenosyl-L-methionine = N(6),N(6),N(6)-trimethyl-L-lysyl(9)-[histone H3] + 3 S-adenosyl-L-homocysteine + 3 H(+). Its activity is regulated as follows. Inhibited by S-adenosyl-L-homocysteine. Negatively regulated by CCAR2. Its function is as follows. Histone methyltransferase that specifically trimethylates 'Lys-9' of histone H3 using monomethylated H3 'Lys-9' as substrate. Also weakly methylates histone H1 (in vitro). H3 'Lys-9' trimethylation represents a specific tag for epigenetic transcriptional repression by recruiting HP1 (CBX1, CBX3 and/or CBX5) proteins to methylated histones. Mainly functions in heterochromatin regions, thereby playing a central role in the establishment of constitutive heterochromatin at pericentric and telomere regions. H3 'Lys-9' trimethylation is also required to direct DNA methylation at pericentric repeats. SUV39H1 is targeted to histone H3 via its interaction with RB1 and is involved in many processes, such as repression of MYOD1-stimulated differentiation, regulation of the control switch for exiting the cell cycle and entering differentiation, repression by the PML-RARA fusion protein, BMP-induced repression, repression of switch recombination to IgA and regulation of telomere length. Component of the eNoSC (energy-dependent nucleolar silencing) complex, a complex that mediates silencing of rDNA in response to intracellular energy status and acts by recruiting histone-modifying enzymes. The eNoSC complex is able to sense the energy status of cell: upon glucose starvation, elevation of NAD(+)/NADP(+) ratio activates SIRT1, leading to histone H3 deacetylation followed by dimethylation of H3 at 'Lys-9' (H3K9me2) by SUV39H1 and the formation of silent chromatin in the rDNA locus. Recruited by the large PER complex to the E-box elements of the circadian target genes such as PER2 itself or PER1, contributes to the conversion of local chromatin to a heterochromatin-like repressive state through H3 'Lys-9' trimethylation. (Microbial infection) Plays a role in defense against mycobacterial infections. Methylates M.tuberculosis HupB on 'Lys-140', probably methylates HupB of M.bovis also. Methylation has an inhibitory effect on mycobacterial growth in the host. Macrophages expressing about 60% SUV39H1 are slightly more susceptible to M.bovis or M.tuberculosis infection. Chaetocin (an inhibitor of this enzyme) increases macrophage survival of M.tuberculosis. This protein inhibits biofilm formation by M.tuberculosis via 'Lys-140' trimethylation. The polypeptide is Histone-lysine N-methyltransferase SUV39H1 (SUV39H1) (Homo sapiens (Human)).